The chain runs to 429 residues: FAD-dependent monooxygenase azaH (429 aa).

The chain crosses the membrane as a helical span at residues 5-25; sequence SIEVAIIGAGITGITLALGLL. Positions 35 and 48 each coordinate FAD. N-linked (GlcNAc...) asparagine glycans are attached at residues N75 and N87. R116 provides a ligand contact to FAD. R199 is an active-site residue. Positions 315 and 328 each coordinate FAD.

It belongs to the paxM FAD-dependent monooxygenase family. It depends on FAD as a cofactor.

Its subcellular location is the membrane. Its pathway is secondary metabolite biosynthesis. Functionally, FAD-dependent monooxygenase; part of the gene cluster that mediates the biosynthesis of azaphilones, a class of fungal metabolites characterized by a highly oxygenated pyrano-quinone bicyclic core and exhibiting a broad range of bioactivities. In the first step, the non-reducing polyketide synthase azaA forms the hexaketide precursor from successive condensations of five malonyl-CoA units, presumably with a simple acetyl-CoA starter unit. The reactive polyketide chain then undergoes a PT-mediated C2-C7 cyclization to afford the aromatic ring and is eventually released as an aldehyde through the R-domain. The putative ketoreductase azaE is proposed to catalyze the reduction of the terminal ketone resulting in the early culture product FK17-P2a. The monooxygenase azaH was demonstrated to be the only enzyme required to convert FK17-P2a to azanigerone E. AzaH first hydroxylates the benzaldehyde intermediate FK17-P2a at C4, which triggers the formation of the pyran-ring to afford azanigerone E. In parallel, the 2,4-dimethylhexanoyl chain is synthesized by the HR-PKS azaB and is proposed to be transferred to the C4-hydroxyl of azanigerone E by the acyltransferase azaD directly from the ACP domain of azaB. Alternatively, the 2,4-dimethyl-hexanoyl chain may be offloaded from the HR-PKS as a carboxylic acid and converted to an acyl-CoA by azaF. The resulting acyl-CoA molecule could then be taken up as a substrate by AzaD to form azanigerone B. To yield the carboxylic acid substituent in azanigerone A, the hydroxypropyl side chain of azanigerone B would need to undergo a C-C oxidative cleavage catalyzed by cytochrome P450 AzaI. AzaI is proposed to act on a vicinal diol that leads to a C-C bond scission either through an alkoxyradical intermediate or a peroxy complex. In the biosynthesis of azanigerone A, azanigerone B first undergoes hydroxylation at C10, possibly catalyzed by one of the two FAD-dependent monooxygenases encoded in the cluster, azaG or azaL, resulting in the vicinal diol azanigerone C. Oxidative cleavage of azanigerone C by azaI would yield the corresponding aldehyde derivative of azanigerone A. Finally, the dehydrogenase azaJ is proposed to convert the aldehyde functional group into the carboxylic acid, completing the conversion from azanigerone B to azanigerone A. Alternatively, the oxidation of aldehyde to carboxylic acid may be catalyzed by the same P450 enzyme azaI via consecutive oxidation or by endogenous alcohol dehydrogenase. The polypeptide is FAD-dependent monooxygenase azaH (Aspergillus niger (strain ATCC 1015 / CBS 113.46 / FGSC A1144 / LSHB Ac4 / NCTC 3858a / NRRL 328 / USDA 3528.7)).